Here is a 281-residue protein sequence, read N- to C-terminus: NADPH-dependent 7-cyano-7-deazaguanine reductase (281 aa).

88 to 90 (IES) lines the substrate pocket. 90–91 (SK) lines the NADPH pocket. C189 functions as the Thioimide intermediate in the catalytic mechanism. The active-site Proton donor is the D196. 228 to 229 (HE) contacts substrate. NADPH is bound at residue 257-258 (RG).

Belongs to the GTP cyclohydrolase I family. QueF type 2 subfamily. Homodimer.

It localises to the cytoplasm. The catalysed reaction is 7-aminomethyl-7-carbaguanine + 2 NADP(+) = 7-cyano-7-deazaguanine + 2 NADPH + 3 H(+). It functions in the pathway tRNA modification; tRNA-queuosine biosynthesis. Functionally, catalyzes the NADPH-dependent reduction of 7-cyano-7-deazaguanine (preQ0) to 7-aminomethyl-7-deazaguanine (preQ1). The chain is NADPH-dependent 7-cyano-7-deazaguanine reductase from Sodalis glossinidius (strain morsitans).